Here is a 155-residue protein sequence, read N- to C-terminus: Gas vesicle protein K (155 aa).

The protein belongs to the gas vesicle GvpK family.

It localises to the gas vesicle. Functionally, might be involved in nucleating gas vesicle formation. Gas vesicles (GV) are hollow, gas filled proteinaceous nanostructures. During planktonic growth they allow positioning of the organism at a favorable depth for light or nutrient acquisition. The polypeptide is Gas vesicle protein K (Dolichospermum flosaquae (Anabaena flos-aquae)).